The sequence spans 770 residues: Pyrophosphate-energized vacuolar membrane proton pump 1 (770 aa).

Over 1–9 (MVAPALLPE) the chain is Intravacuolar. Residues 10–36 (LWTEILVPICAVIGIAFSLFQWYVVSR) traverse the membrane as a helical segment. Over 37 to 88 (VKLTSDLGASSSGGANNGKNGYGDYLIEEEEGVNDQSVVAKCAEIQTAISEG) the chain is Cytoplasmic. The helical transmembrane segment at 89–118 (ATSFLFTEYKYVGVFMIFFAAVIFVFLGSV) threads the bilayer. At 119 to 139 (EGFSTDNKPCTYDTTRTCKPA) the chain is on the intravacuolar side. Cys128 and Cys136 are oxidised to a cystine. Residues 140-167 (LATAAFSTIAFVLGAVTSVLSGFLGMKI) form a helical membrane-spanning segment. Over 168–190 (ATYANARTTLEARKGVGKAFIVA) the chain is Cytoplasmic. A helical membrane pass occupies residues 191–220 (FRSGAVMGFLLAASGLLVLYITINVFKIYY). Residues 221–223 (GDD) are Intravacuolar-facing. The chain crosses the membrane as a helical span at residues 224–252 (WEGLFEAITGYGLGGSSMALFGRVGGGIY). Residues 253–290 (TKAADVGADLVGKIERNIPEDDPRNPAVIADNVGDNVG) lie on the Cytoplasmic side of the membrane. Residue Lys254 coordinates substrate. Asp257, Asp261, and Asp287 together coordinate Mg(2+). The helical transmembrane segment at 291–316 (DIAGMGSDLFGSYAEASCAALVVASI) threads the bilayer. At 317 to 324 (SSFGINHD) the chain is on the intravacuolar side. Residues 325–350 (FTAMCYPLLISSMGILVCLITTLFAT) form a helical membrane-spanning segment. At 351–358 (DFFEIKLV) the chain is on the cytoplasmic side. The helical transmembrane segment at 359–386 (KEIEPALKNQLIISTVIMTVGIAIVSWV) threads the bilayer. Topologically, residues 387 to 405 (GLPTSFTIFNFGTQKVVKN) are intravacuolar. The helical transmembrane segment at 406–429 (WQLFLCVCVGLWAGLIIGFVTEYY) threads the bilayer. Residues 430–451 (TSNAYSPVQDVADSCRTGAATN) are Cytoplasmic-facing. The chain crosses the membrane as a helical span at residues 452–476 (VIFGLALGYKSVIIPIFAIAISIFV). Residues 477–482 (SFSFAA) lie on the Intravacuolar side of the membrane. Residues 483 to 509 (MYGVAVAALGMLSTIATGLAIDAYGPI) form a helical membrane-spanning segment. Over 510 to 538 (SDNAGGIAEMAGMSHRIRERTDALDAAGN) the chain is Cytoplasmic. Residues Asp511 and Asn538 each coordinate Mg(2+). Residues 539-567 (TTAAIGKGFAIGSAALVSLALFGAFVSRA) traverse the membrane as a helical segment. The Intravacuolar portion of the chain corresponds to 568–577 (GIHTVDVLTP). A helical membrane pass occupies residues 578–606 (KVIIGLLVGAMLPYWFSAMTMKSVGSAAL). Residues 607-635 (KMVEEVRRQFNTIPGLMEGTAKPDYATCV) are Cytoplasmic-facing. A helical membrane pass occupies residues 636–664 (KISTDASIKEMIPPGCLVMLTPLIVGFFF). Gly665 is a topological domain (intravacuolar). The helical transmembrane segment at 666–693 (VETLSGVLAGSLVSGVQIAISASNTGGA) threads the bilayer. The Cytoplasmic portion of the chain corresponds to 694 to 736 (WDNAKKYIEAGVSEHAKSLGPKGSEPHKAAVIGDTIGDPLKDT). 2 residues coordinate Mg(2+): Asp695 and Asp731. Lys734 is a binding site for substrate. The chain crosses the membrane as a helical span at residues 737–762 (SGPSLNILIKLMAVESLVFAPFFATH). Residues 763 to 770 (GGILFKYF) are Intravacuolar-facing.

It belongs to the H(+)-translocating pyrophosphatase (TC 3.A.10) family. K(+)-stimulated subfamily. As to quaternary structure, monomer. Ubiquitous (at protein level). Mostly expressed in vascular tissues, meristems and root pericycle.

Its subcellular location is the vacuole membrane. It is found in the endosome membrane. The protein localises to the cell membrane. The catalysed reaction is diphosphate + H2O + H(+)(in) = 2 phosphate + 2 H(+)(out). Its activity is regulated as follows. Activated by K(+) and Mg(2+). Inhibited by Ca(2+), N,N'-dicyclohexylcarbodiimide (DCCD), N-ethylmaleimide (NEM) and aminomethylenediphosphonate (AMDP), and, to a lower extent, by fluoride (KF). Functionally, contributes to the transtonoplast (from cytosol to vacuole lumen) H(+)-electrochemical potential difference. It establishes a proton gradient of similar and often greater magnitude than the H(+)-ATPase on the same membrane. In addition, facilitates auxin transport by modulating apoplastic pH and regulates auxin-mediated developmental processes. Confers tolerance to NaCl and to drought by increasing ion retention. The sequence is that of Pyrophosphate-energized vacuolar membrane proton pump 1 (AVP1) from Arabidopsis thaliana (Mouse-ear cress).